We begin with the raw amino-acid sequence, 380 residues long: PqqA peptide cyclase (380 aa).

The region spanning 12 to 228 (FGIPLAVLLE…EEARERLKGR (217 aa)) is the Radical SAM core domain. The [4Fe-4S] cluster site is built by cysteine 26, cysteine 30, and cysteine 33.

The protein belongs to the radical SAM superfamily. PqqE family. As to quaternary structure, interacts with PqqD. The interaction is necessary for activity of PqqE. [4Fe-4S] cluster is required as a cofactor.

The enzyme catalyses [PQQ precursor protein] + S-adenosyl-L-methionine = E-Y cross-linked-[PQQ precursor protein] + 5'-deoxyadenosine + L-methionine + H(+). It functions in the pathway cofactor biosynthesis; pyrroloquinoline quinone biosynthesis. Catalyzes the cross-linking of a glutamate residue and a tyrosine residue in the PqqA protein as part of the biosynthesis of pyrroloquinoline quinone (PQQ). The polypeptide is PqqA peptide cyclase (Bradyrhizobium diazoefficiens (strain JCM 10833 / BCRC 13528 / IAM 13628 / NBRC 14792 / USDA 110)).